The primary structure comprises 410 residues: Neuroserpin (410 aa).

Residues 1–16 (MAYLGLLSLVALQSLV) form the signal peptide. S83 bears the Phosphoserine mark. N-linked (GlcNAc...) asparagine glycans are attached at residues N157, N321, and N401. The O-linked (Xyl...) (chondroitin sulfate) serine glycan is linked to S403.

It belongs to the serpin family. As to expression, detected in adult pituitary and adrenal gland.

The protein localises to the secreted. It is found in the cytoplasmic vesicle. Its subcellular location is the secretory vesicle lumen. The protein resides in the perikaryon. Serine protease inhibitor that inhibits plasminogen activators and plasmin but not thrombin. May be involved in the formation or reorganization of synaptic connections as well as for synaptic plasticity in the adult nervous system. May protect neurons from cell damage by tissue-type plasminogen activator. The polypeptide is Neuroserpin (Serpini1) (Rattus norvegicus (Rat)).